The following is a 231-amino-acid chain: MITELAAMLKERFGIVFNDPDLLAEAFTQASYVNEHQDQQLKYYERVEFLGDAVLELVVSEYLYKRYKDMPQGKLTRLRAAMVCEESFASFARECDFPQYIRLGKGEQKAHAWERDSLLCDIFESFVGALYLDQGREPVLKFVHQVIFPKLDEGRFDGVFDYKTTLQEYLQRDGDVAIDYQLIEQDGPANERSYEIAVLADGQKIGEGWGHSKKEAEQSAARQAYSQLQQK.

Positions 6-135 constitute an RNase III domain; the sequence is AAMLKERFGI…FVGALYLDQG (130 aa). Residue Glu-48 participates in Mg(2+) binding. Asp-52 is an active-site residue. 2 residues coordinate Mg(2+): Asp-121 and Glu-124. Glu-124 is a catalytic residue. In terms of domain architecture, DRBM spans 161 to 230; it reads DYKTTLQEYL…ARQAYSQLQQ (70 aa). The interval 209-231 is disordered; it reads WGHSKKEAEQSAARQAYSQLQQK. Over residues 220 to 231 the composition is skewed to polar residues; the sequence is AARQAYSQLQQK.

This sequence belongs to the ribonuclease III family. In terms of assembly, homodimer. The cofactor is Mg(2+).

It is found in the cytoplasm. The enzyme catalyses Endonucleolytic cleavage to 5'-phosphomonoester.. Its function is as follows. Digests double-stranded RNA. Involved in the processing of primary rRNA transcript to yield the immediate precursors to the large and small rRNAs (23S and 16S). Processes some mRNAs, and tRNAs when they are encoded in the rRNA operon. Processes pre-crRNA and tracrRNA of type II CRISPR loci if present in the organism. The protein is Ribonuclease 3 of Lactiplantibacillus plantarum (strain ATCC BAA-793 / NCIMB 8826 / WCFS1) (Lactobacillus plantarum).